A 901-amino-acid chain; its full sequence is Cyanophycin synthetase (901 aa).

The ATP-grasp domain maps to 224-478; the sequence is KRILAASGVP…VAGAVMDMLF (255 aa). 493-499 serves as a coordination point for ATP; sequence GTNGKTT.

This sequence in the C-terminal section; belongs to the MurCDEF family. In terms of assembly, homodimer.

It catalyses the reaction [L-4-(L-arginin-2-N-yl)aspartate](n) + L-aspartate + ATP = [L-4-(L-arginin-2-N-yl)aspartate](n)-L-aspartate + ADP + phosphate + H(+). The enzyme catalyses [L-4-(L-arginin-2-N-yl)aspartate](n)-L-aspartate + L-arginine + ATP = [L-4-(L-arginin-2-N-yl)aspartate](n+1) + ADP + phosphate + H(+). Catalyzes the ATP-dependent polymerization of arginine and aspartate to multi-L-arginyl-poly-L-aspartic acid (cyanophycin; a water-insoluble reserve polymer). The sequence is that of Cyanophycin synthetase (cphA) from Nostoc sp. (strain PCC 7120 / SAG 25.82 / UTEX 2576).